The following is a 420-amino-acid chain: MNIIDELQWRGLINQSTDIDALREACEKPITLYCGFDPTGDSLHAGHLVPMIMLRRFQEAGHRPITLAGGATGFIGDPRDVGERSMLSQDTIEHNLESIKKQLRSFVRFDGDSPAIMVNNADWTMSMSVVDFLRDVGKNFSLNTMLDRETVKRRLETDGISYTEFSYMLLQANDFVQLNREYDCVLQIGGGDQWGNIVSGVDLNRRVSGTKTHALTVPLVTDAQGQKFGKSTGGGKLWLDPEKTSAYSWYQYFLNAGDSVVIDYLRWFTFLTQEEIAELETEVRERPHLRAAQRRLAQEMTDLVHGHDATVSVELAAQALFGRASLQDLDEATLDGALSETVIFEVPAGESPTIIDLLIGAGLVDSKGAARRTIKEGGAYVNNERIESEDWQPTDDVLLHGAWLVLRKGKKNFAGVKYSA.

Tyr-33 serves as a coordination point for L-tyrosine. Positions 38–47 match the 'HIGH' region motif; sequence PTGDSLHAGH. 2 residues coordinate L-tyrosine: Tyr-167 and Gln-171. The 'KMSKS' region motif lies at 227-231; sequence KFGKS. ATP is bound at residue Lys-230. One can recognise an S4 RNA-binding domain in the interval 352–418; it reads PTIIDLLIGA…GKKNFAGVKY (67 aa).

This sequence belongs to the class-I aminoacyl-tRNA synthetase family. TyrS type 1 subfamily. Homodimer.

The protein resides in the cytoplasm. The catalysed reaction is tRNA(Tyr) + L-tyrosine + ATP = L-tyrosyl-tRNA(Tyr) + AMP + diphosphate + H(+). Its function is as follows. Catalyzes the attachment of tyrosine to tRNA(Tyr) in a two-step reaction: tyrosine is first activated by ATP to form Tyr-AMP and then transferred to the acceptor end of tRNA(Tyr). In Corynebacterium diphtheriae (strain ATCC 700971 / NCTC 13129 / Biotype gravis), this protein is Tyrosine--tRNA ligase.